A 206-amino-acid chain; its full sequence is Ribosomal RNA large subunit methyltransferase E (206 aa).

Residues Gly60, Trp62, Asp80, Asp96, and Asp121 each coordinate S-adenosyl-L-methionine. Lys161 acts as the Proton acceptor in catalysis.

It belongs to the class I-like SAM-binding methyltransferase superfamily. RNA methyltransferase RlmE family.

It localises to the cytoplasm. The catalysed reaction is uridine(2552) in 23S rRNA + S-adenosyl-L-methionine = 2'-O-methyluridine(2552) in 23S rRNA + S-adenosyl-L-homocysteine + H(+). Its function is as follows. Specifically methylates the uridine in position 2552 of 23S rRNA at the 2'-O position of the ribose in the fully assembled 50S ribosomal subunit. This is Ribosomal RNA large subunit methyltransferase E from Francisella tularensis subsp. tularensis (strain FSC 198).